Here is a 623-residue protein sequence, read N- to C-terminus: Myosin light chain kinase 2, skeletal/cardiac muscle (623 aa).

Disordered regions lie at residues 1 to 179 (MATE…PSCP) and 204 to 251 (GVPV…QGDT). Ala-2 carries the N-acetylalanine modification. Residues 20-31 (APKAAAGEGPPA) show a composition bias toward low complexity. Composition is skewed to basic and acidic residues over residues 32 to 43 (AEKDPGPPDPQK) and 49 to 89 (DPEK…EKGD). Residues 90–102 (GASAQPSASSQGP) show a composition bias toward low complexity. Residues 150–159 (GEAKEQKKVA) show a composition bias toward basic and acidic residues. A phosphoserine mark is found at Ser-169, Ser-175, and Ser-177. A compositionally biased stretch (low complexity) spans 204–214 (GVPVTPGPTET). Residues 215-224 (EPAKVAEGEK) are compositionally biased toward basic and acidic residues. Residues 312–567 (LNSKEALGGG…AAQCLAHPWL (256 aa)) enclose the Protein kinase domain. Residues 318-326 (LGGGKFGAV) and Lys-341 each bind ATP. Asp-433 (proton acceptor) is an active-site residue. Thr-472 carries the post-translational modification Phosphothreonine. Residues 601 to 613 (IAVSAANRFKKIS) are calmodulin-binding.

It belongs to the protein kinase superfamily. CAMK Ser/Thr protein kinase family. May interact with centrin.

Its subcellular location is the cytoplasm. It carries out the reaction L-seryl-[myosin light chain] + ATP = O-phospho-L-seryl-[myosin light chain] + ADP + H(+). The enzyme catalyses L-threonyl-[myosin light chain] + ATP = O-phospho-L-threonyl-[myosin light chain] + ADP + H(+). Implicated in the level of global muscle contraction and cardiac function. Phosphorylates a specific serine in the N-terminus of a myosin light chain. In Bos taurus (Bovine), this protein is Myosin light chain kinase 2, skeletal/cardiac muscle (MYLK2).